The primary structure comprises 475 residues: Retrotransposon Gag-like protein 3 (475 aa).

Composition is skewed to basic and acidic residues over residues 51-66 (LLRK…KLPE) and 78-87 (KTPEFKEPQK). Disordered regions lie at residues 51-101 (LLRK…EPPA), 152-173 (EPKN…APEY), and 397-421 (DPNP…ENQP). The CCHC-type zinc-finger motif lies at 443–462 (RLCLYCGYPGHFARDCPVKP).

The protein localises to the nucleus. Its function is as follows. May function as a transcriptional regulator. Plays a role in postnatal myogenesis, may be involved in the regulation of satellite cells self-renewal. The polypeptide is Retrotransposon Gag-like protein 3 (Homo sapiens (Human)).